We begin with the raw amino-acid sequence, 352 residues long: Phenylalanine--tRNA ligase alpha subunit (352 aa).

Residue Glu258 participates in Mg(2+) binding.

The protein belongs to the class-II aminoacyl-tRNA synthetase family. Phe-tRNA synthetase alpha subunit type 1 subfamily. In terms of assembly, tetramer of two alpha and two beta subunits. Mg(2+) serves as cofactor.

The protein resides in the cytoplasm. It carries out the reaction tRNA(Phe) + L-phenylalanine + ATP = L-phenylalanyl-tRNA(Phe) + AMP + diphosphate + H(+). The protein is Phenylalanine--tRNA ligase alpha subunit of Staphylococcus saprophyticus subsp. saprophyticus (strain ATCC 15305 / DSM 20229 / NCIMB 8711 / NCTC 7292 / S-41).